A 1432-amino-acid polypeptide reads, in one-letter code: Superkiller protein 3 (1432 aa).

2 TPR repeats span residues 4–37 (IKQLLKEAKQELTNRDYEETIEISEKVLKLDPDN) and 47–80 (ALSSLPASNNVSSNRNLERATNHYVSAAKLVPDN). Positions 339 to 397 (SANKPPEGHKKTEKETDIKDVDETNEDEVKDRVEDEVKDRVEDEVKDQDEEAKEDEEED) are disordered. Positions 344 to 381 (PEGHKKTEKETDIKDVDETNEDEVKDRVEDEVKDRVED) are enriched in basic and acidic residues. Residues 382–397 (EVKDQDEEAKEDEEED) show a composition bias toward acidic residues. TPR repeat units lie at residues 425 to 458 (ILAHRILCQYYLLTKEYEAALPYIKNGISLIAYN), 471 to 507 (REFSLDLATVYTYVDAPKDHNAALKLYDNILSGDFSN), 508 to 541 (IQAKMGKGIIFIERKNWKDAMTLLTQVHEQSPNN), 627 to 661 (APGFSTLGDIYCHYYKDHLRAFKCYFKAFDLDAGD), 702 to 735 (NWPFRVVGIAHLEKQEESDSIEWFQSALRVDPND), 736 to 769 (VESWVGLGQAYHACGRIEASIKVFDKAIQLRPSH), 945 to 985 (ASYW…QSNT), 987 to 1018 (ETWIGLGIATMDINFRVSQHCFIKATALEPKA), and 1226 to 1259 (ISNHICLGLSYFFLNDFDQTLNQFQELLSISKDS).

Belongs to the SKI3 family. In terms of assembly, component of the SKI complex composed of at least SKI2, SKI3 and SKI8. The SKI complex interacts with SKI7, which makes the link between the SKI complex and the exosome in order to perform mRNA degradation.

It is found in the cytoplasm. Its subcellular location is the nucleus. In terms of biological role, component of the SKI complex involved in 3'-mRNA degradation pathway. Represses dsRNA virus propagation by specifically blocking translation of viral mRNAs, perhaps recognizing the absence of CAP or poly(A). Essential for cell growth only in the presence of M1 replicon. The polypeptide is Superkiller protein 3 (SKI3) (Saccharomyces cerevisiae (strain ATCC 204508 / S288c) (Baker's yeast)).